The following is a 415-amino-acid chain: Mulatexin (415 aa).

The signal sequence occupies residues 1–21 (MKFRTLLIIFSLVFLLEIVSA). Residues 23–66 (EPQCGRDAGGALCHGNLCCSHWGFCGTTAIYCDVDQGCQSQCWS) enclose the Chitin-binding type-1 1 domain. Intrachain disulfides connect C26–C41, C35–C47, C40–C54, and C60–C64. The segment at 65-127 (WSSPPPPSPP…PGGPERPDHR (63 aa)) is disordered. The segment covering 67 to 121 (SPPPPSPPPPPPSPPPPSPPPPSPPPPSPPPPSPPPPSPPPPSPPPPSPPPPGGP) has biased composition (pro residues). Residues 125–167 (DHRCGRALGNPPCNPGRCCSIHNWCGSTAAYCRGSSCQYQCWN) form the Chitin-binding type-1 2 domain. 4 disulfide bridges follow: C128-C143, C137-C149, C142-C156, and C161-C165. An N-linked (GlcNAc...) asparagine glycan is attached at N264.

Post-translationally, glycosylated.

The protein localises to the secreted. Chitin-binding protein which slows larval growth when consumed by the lepidopteran species S.ricini and M.brassica, but not when consumed by the mulberry specialist B.mori. Lacks chitinase activity. This is Mulatexin from Morus alba (White mulberry).